The sequence spans 252 residues: Large ribosomal subunit protein uL29m (252 aa).

Residues 1-39 (MSTSTVIRPVARSLLQLRKAGNTPPAFLLPCLQSSSTTS) constitute a mitochondrion transit peptide. Residues 233 to 242 (EDVLAEAEGE) are compositionally biased toward acidic residues. Residues 233-252 (EDVLAEAEGEAEPKPAQVTA) are disordered.

This sequence belongs to the universal ribosomal protein uL29 family. As to quaternary structure, component of the mitochondrial large ribosomal subunit. Mature mitochondrial ribosomes consist of a small (37S) and a large (54S) subunit. The 37S subunit contains at least 33 different proteins and 1 molecule of RNA (15S). The 54S subunit contains at least 45 different proteins and 1 molecule of RNA (21S).

Its subcellular location is the mitochondrion. This chain is Large ribosomal subunit protein uL29m (mrpl4), found in Botryotinia fuckeliana (strain B05.10) (Noble rot fungus).